The chain runs to 240 residues: Octanoyltransferase (240 aa).

The region spanning 49-233 is the BPL/LPL catalytic domain; that stretch reads HQAEELVWLL…AFESVFGATR (185 aa). Residues 87–94, 162–164, and 175–177 contribute to the substrate site; these read RGGQVTYH, AIG, and GIA. Cys193 functions as the Acyl-thioester intermediate in the catalytic mechanism.

Belongs to the LipB family.

It localises to the cytoplasm. The enzyme catalyses octanoyl-[ACP] + L-lysyl-[protein] = N(6)-octanoyl-L-lysyl-[protein] + holo-[ACP] + H(+). The protein operates within protein modification; protein lipoylation via endogenous pathway; protein N(6)-(lipoyl)lysine from octanoyl-[acyl-carrier-protein]: step 1/2. Catalyzes the transfer of endogenously produced octanoic acid from octanoyl-acyl-carrier-protein onto the lipoyl domains of lipoate-dependent enzymes. Lipoyl-ACP can also act as a substrate although octanoyl-ACP is likely to be the physiological substrate. This is Octanoyltransferase from Bradyrhizobium sp. (strain ORS 278).